Reading from the N-terminus, the 178-residue chain is Probetacellulin (178 aa).

Positions 1–31 (MDRAARCSGASSLPLLLALALGLVILHCVVA) are cleaved as a signal peptide. The Extracellular segment spans residues 32–118 (DGNSTRSPET…LFYLRGDRGQ (87 aa)). Asparagine 34 carries N-linked (GlcNAc...) asparagine glycosylation. Positions 65 to 105 (HFSRCPKQYKHYCIKGRCRFVVAEQTPSCVCDEGYIGARCE) constitute an EGF-like domain. Disulfide bonds link cysteine 69-cysteine 82, cysteine 77-cysteine 93, and cysteine 95-cysteine 104. Residues 112 to 178 (LRGDRGQILV…NEDIEETNIA (67 aa)) constitute a propeptide, removed in mature form. A helical transmembrane segment spans residues 119–139 (ILVICLIAVMVVFIILVIGVC). The Cytoplasmic portion of the chain corresponds to 140–178 (TCCHPLRKRRKRKKKEEEMETLGKDITPINEDIEETNIA).

In terms of assembly, monomer. Interacts with EGFR and ERBB4. As to expression, synthesized in several tissues and tumor cells. Predominantly expressed in pancreas and small intestine.

The protein localises to the secreted. It localises to the extracellular space. The protein resides in the cell membrane. Growth factor that binds to EGFR, ERBB4 and other EGF receptor family members. Potent mitogen for retinal pigment epithelial cells and vascular smooth muscle cells. The polypeptide is Probetacellulin (BTC) (Homo sapiens (Human)).